The primary structure comprises 330 residues: Fructose-1,6-bisphosphatase class 1 (330 aa).

Mg(2+) contacts are provided by Glu-84, Asp-103, Leu-105, and Asp-106. Residues 106–109 (DGSS), Asn-196, and Lys-262 contribute to the substrate site. Glu-268 is a binding site for Mg(2+).

It belongs to the FBPase class 1 family. As to quaternary structure, homotetramer. Mg(2+) serves as cofactor.

Its subcellular location is the cytoplasm. The catalysed reaction is beta-D-fructose 1,6-bisphosphate + H2O = beta-D-fructose 6-phosphate + phosphate. The protein operates within carbohydrate biosynthesis; gluconeogenesis. The protein is Fructose-1,6-bisphosphatase class 1 of Shewanella frigidimarina (strain NCIMB 400).